The chain runs to 128 residues: Glycine cleavage system H protein (128 aa).

Residues 23–105 (VATVGISDHA…YEGGWLFKVQ (83 aa)) form the Lipoyl-binding domain. Lys64 carries the post-translational modification N6-lipoyllysine.

It belongs to the GcvH family. As to quaternary structure, the glycine cleavage system is composed of four proteins: P, T, L and H. Requires (R)-lipoate as cofactor.

Functionally, the glycine cleavage system catalyzes the degradation of glycine. The H protein shuttles the methylamine group of glycine from the P protein to the T protein. The chain is Glycine cleavage system H protein from Alcanivorax borkumensis (strain ATCC 700651 / DSM 11573 / NCIMB 13689 / SK2).